A 1529-amino-acid polypeptide reads, in one-letter code: DNA-directed RNA polymerase subunit beta' (1529 aa).

Residues cysteine 156, cysteine 158, cysteine 183, and cysteine 186 each coordinate Zn(2+). Mg(2+) contacts are provided by aspartate 1328, aspartate 1330, and aspartate 1332.

It belongs to the RNA polymerase beta' chain family. RpoC1 subfamily. As to quaternary structure, in plastids the minimal PEP RNA polymerase catalytic core is composed of four subunits: alpha, beta, beta', and beta''. When a (nuclear-encoded) sigma factor is associated with the core the holoenzyme is formed, which can initiate transcription. It depends on Mg(2+) as a cofactor. The cofactor is Zn(2+).

It localises to the plastid. The protein resides in the chloroplast. The catalysed reaction is RNA(n) + a ribonucleoside 5'-triphosphate = RNA(n+1) + diphosphate. Functionally, DNA-dependent RNA polymerase catalyzes the transcription of DNA into RNA using the four ribonucleoside triphosphates as substrates. In Tetradesmus obliquus (Green alga), this protein is DNA-directed RNA polymerase subunit beta'.